The chain runs to 479 residues: Muscarinic acetylcholine receptor M4 (479 aa).

Topologically, residues 1–30 (MANFTPVNGSSANQSVRLVTTAHNHLETVE) are extracellular. N-linked (GlcNAc...) asparagine glycans are attached at residues Asn8 and Asn13. The chain crosses the membrane as a helical span at residues 31–53 (MVFIATVTGSLSLVTVVGNILVM). Residues 54 to 67 (LSIKVNRQLQTVNN) lie on the Cytoplasmic side of the membrane. The helical transmembrane segment at 68-88 (YFLFSLACADLIIGAFSMNLY) threads the bilayer. The Extracellular segment spans residues 89–105 (TLYIIKGYWPLGAVVCD). Cys104 and Cys184 are joined by a disulfide. Residues 106 to 127 (LWLALDYVVSNASVMNLLIISF) form a helical membrane-spanning segment. The Cytoplasmic portion of the chain corresponds to 128–147 (DRYFCVTKPLTYPARRTTKM). The helical transmembrane segment at 148-170 (AGLMIAAAWVLSFVLWAPAILFW) threads the bilayer. Residues 171–192 (QFVVGKRTVPDNQCFIQFLSNP) are Extracellular-facing. A helical transmembrane segment spans residues 193 to 215 (AVTFGTAIAAFYLPVVIMTVLYI). At 216 to 401 (HISLASRSRV…AARERKVTRT (186 aa)) the chain is on the cytoplasmic side. Residues 271–334 (LEEAPPPALP…APTLQPRTLN (64 aa)) are disordered. Residues 274–285 (APPPALPPPPRP) are compositionally biased toward pro residues. Over residues 293–303 (NESSSGSATQN) the composition is skewed to polar residues. Over residues 310–333 (TELSTTEAATTPALPAPTLQPRTL) the composition is skewed to low complexity. The chain crosses the membrane as a helical span at residues 402–422 (IFAILLAFILTWTPYNVMVLV). Residues 423-436 (NTFCQSCIPERVWS) lie on the Extracellular side of the membrane. The helical transmembrane segment at 437 to 456 (IGYWLCYVNSTINPACYALC) threads the bilayer. Residues 457–479 (NATFKKTFRHLLLCQYRNIGTAR) lie on the Cytoplasmic side of the membrane. Residues Thr459, Thr463, and Thr477 each carry the phosphothreonine modification.

The protein belongs to the G-protein coupled receptor 1 family. Muscarinic acetylcholine receptor subfamily. CHRM4 sub-subfamily.

It is found in the cell membrane. The protein localises to the postsynaptic cell membrane. In terms of biological role, the muscarinic acetylcholine receptor mediates various cellular responses, including inhibition of adenylate cyclase, breakdown of phosphoinositides and modulation of potassium channels through the action of G proteins. Primary transducing effect is inhibition of adenylate cyclase. The sequence is that of Muscarinic acetylcholine receptor M4 (Chrm4) from Mus musculus (Mouse).